The chain runs to 167 residues: MRCGSLCRFLWLWSCLPYIEAMPIQRVQDDTKTLIKTIITRINDISPPQGVCSRPRVAGLDFIPRVQSVRTLSGMDQILATYQQILTSLQSRSVVQIANDLANLRALLRLLASAKSCPVPRARGSDTIKGLGNVLRASVHSTEVVALSRLKAALQDMLRQLDRNPGC.

Residues 1 to 21 form the signal peptide; it reads MRCGSLCRFLWLWSCLPYIEA. C117 and C167 are joined by a disulfide.

It belongs to the leptin family.

Its subcellular location is the secreted. In terms of biological role, key player in the regulation of energy balance and body weight control. Once released into the circulation, has central and peripheral effects by binding LEPR, found in many tissues, which results in the activation of several major signaling pathways. In the hypothalamus, acts as an appetite-regulating factor that induces a decrease in food intake and an increase in energy consumption by inducing anorexinogenic factors and suppressing orexigenic neuropeptides, also regulates bone mass and secretion of hypothalamo-pituitary-adrenal hormones. In the periphery, increases basal metabolism, influences reproductive function, regulates pancreatic beta-cell function and insulin secretion, is pro-angiogenic for endothelial cell and affects innate and adaptive immunity. In the arcuate nucleus of the hypothalamus, activates by depolarization POMC neurons inducing FOS and SOCS3 expression to release anorexigenic peptides and inhibits by hyperpolarization NPY neurons inducing SOCS3 with a consequent reduction on release of orexigenic peptides. In addition to its known satiety inducing effect, has a modulatory role in nutrient absorption. In the intestine, reduces glucose absorption by enterocytes by activating PKC and leading to a sequential activation of p38, PI3K and ERK signaling pathways which exerts an inhibitory effect on glucose absorption. Acts as a growth factor on certain tissues, through the activation of different signaling pathways increases expression of genes involved in cell cycle regulation such as CCND1, via JAK2-STAT3 pathway, or VEGFA, via MAPK1/3 and PI3K-AKT1 pathways. May also play an apoptotic role via JAK2-STAT3 pathway and up-regulation of BIRC5 expression. Pro-angiogenic, has mitogenic activity on vascular endothelial cells and plays a role in matrix remodeling by regulating the expression of matrix metalloproteinases (MMPs) and tissue inhibitors of metalloproteinases (TIMPs). In innate immunity, modulates the activity and function of neutrophils by increasing chemotaxis and the secretion of oxygen radicals. Increases phagocytosis by macrophages and enhances secretion of pro-inflammatory mediators. Increases cytotoxic ability of NK cells. Plays a pro-inflammatory role, in synergy with IL1B, by inducing NOS2 which promotes the production of IL6, IL8 and Prostaglandin E2, through a signaling pathway that involves JAK2, PI3K, MAP2K1/MEK1 and MAPK14/p38. In adaptive immunity, promotes the switch of memory T-cells towards T helper-1 cell immune responses. Increases CD4(+)CD25(-) T-cell proliferation and reduces autophagy during TCR (T-cell receptor) stimulation, through MTOR signaling pathway activation and BCL2 up-regulation. This chain is Leptin (LEP), found in Halichoerus grypus (Gray seal).